We begin with the raw amino-acid sequence, 223 residues long: Deoxyribose-phosphate aldolase (223 aa).

Aspartate 89 (proton donor/acceptor) is an active-site residue. Lysine 152 serves as the catalytic Schiff-base intermediate with acetaldehyde. The Proton donor/acceptor role is filled by lysine 181.

The protein belongs to the DeoC/FbaB aldolase family. DeoC type 1 subfamily.

The protein localises to the cytoplasm. It catalyses the reaction 2-deoxy-D-ribose 5-phosphate = D-glyceraldehyde 3-phosphate + acetaldehyde. It functions in the pathway carbohydrate degradation; 2-deoxy-D-ribose 1-phosphate degradation; D-glyceraldehyde 3-phosphate and acetaldehyde from 2-deoxy-alpha-D-ribose 1-phosphate: step 2/2. Its function is as follows. Catalyzes a reversible aldol reaction between acetaldehyde and D-glyceraldehyde 3-phosphate to generate 2-deoxy-D-ribose 5-phosphate. The chain is Deoxyribose-phosphate aldolase from Bacillus cereus (strain B4264).